The primary structure comprises 471 residues: Putative multidrug resistance protein MdtD (471 aa).

Residues Met1 to Gln11 are Periplasmic-facing. Residues Leu12–Ala32 traverse the membrane as a helical segment. Residues Leu33 to His48 lie on the Cytoplasmic side of the membrane. Residues Met49–Ala69 traverse the membrane as a helical segment. Topologically, residues Asp70 to Asn76 are periplasmic. The helical transmembrane segment at Ile77 to Thr97 threads the bilayer. Residues Leu98–Leu101 are Cytoplasmic-facing. The chain crosses the membrane as a helical span at residues Leu102–Met124. Residues Lys125 to Thr137 are Periplasmic-facing. Residues Phe138–Val158 form a helical membrane-spanning segment. The Cytoplasmic segment spans residues Glu159–His164. The helical transmembrane segment at Trp165 to Met185 threads the bilayer. Over Pro186–Asp196 the chain is Periplasmic. A helical membrane pass occupies residues Leu197–Ser217. The Cytoplasmic portion of the chain corresponds to Lys218 to Pro224. A helical transmembrane segment spans residues Leu225–Ala245. The Periplasmic portion of the chain corresponds to Arg246–Thr262. A helical membrane pass occupies residues Phe263–Met283. Residues Thr284–Pro285 lie on the Cytoplasmic side of the membrane. Residues Val286–Met306 form a helical membrane-spanning segment. Over Val307–Thr341 the chain is Periplasmic. Residues Met342–Leu362 form a helical membrane-spanning segment. Over Gln363–Ser395 the chain is Cytoplasmic. Residues Met396–Phe416 form a helical membrane-spanning segment. Residues Gly417–Thr430 are Periplasmic-facing. Residues Val431 to Ala451 form a helical membrane-spanning segment. Residues Arg452–Gln471 lie on the Cytoplasmic side of the membrane.

The protein belongs to the major facilitator superfamily. TCR/Tet family.

The protein localises to the cell inner membrane. The sequence is that of Putative multidrug resistance protein MdtD from Escherichia coli O7:K1 (strain IAI39 / ExPEC).